A 273-amino-acid polypeptide reads, in one-letter code: Formamidopyrimidine-DNA glycosylase (273 aa).

P2 serves as the catalytic Schiff-base intermediate with DNA. E3 (proton donor) is an active-site residue. Residue K59 is the Proton donor; for beta-elimination activity of the active site. DNA is bound by residues H92 and R111. The FPG-type zinc finger occupies 239–273 (KVYGKTDEPCVVCGKPIEKIKLNGRGTHFCPNCQK). The active-site Proton donor; for delta-elimination activity is R263.

Belongs to the FPG family. As to quaternary structure, monomer. Zn(2+) serves as cofactor.

It catalyses the reaction Hydrolysis of DNA containing ring-opened 7-methylguanine residues, releasing 2,6-diamino-4-hydroxy-5-(N-methyl)formamidopyrimidine.. It carries out the reaction 2'-deoxyribonucleotide-(2'-deoxyribose 5'-phosphate)-2'-deoxyribonucleotide-DNA = a 3'-end 2'-deoxyribonucleotide-(2,3-dehydro-2,3-deoxyribose 5'-phosphate)-DNA + a 5'-end 5'-phospho-2'-deoxyribonucleoside-DNA + H(+). Functionally, involved in base excision repair of DNA damaged by oxidation or by mutagenic agents. Acts as a DNA glycosylase that recognizes and removes damaged bases. Has a preference for oxidized purines, such as 7,8-dihydro-8-oxoguanine (8-oxoG). Has AP (apurinic/apyrimidinic) lyase activity and introduces nicks in the DNA strand. Cleaves the DNA backbone by beta-delta elimination to generate a single-strand break at the site of the removed base with both 3'- and 5'-phosphates. This is Formamidopyrimidine-DNA glycosylase from Listeria monocytogenes serotype 4b (strain F2365).